The primary structure comprises 310 residues: tRNA-cytidine(32) 2-sulfurtransferase (310 aa).

The PP-loop motif signature appears at 47 to 52; it reads SGGKDS. Residues C122, C125, and C213 each coordinate [4Fe-4S] cluster.

It belongs to the TtcA family. As to quaternary structure, homodimer. Requires Mg(2+) as cofactor. [4Fe-4S] cluster serves as cofactor.

It is found in the cytoplasm. It catalyses the reaction cytidine(32) in tRNA + S-sulfanyl-L-cysteinyl-[cysteine desulfurase] + AH2 + ATP = 2-thiocytidine(32) in tRNA + L-cysteinyl-[cysteine desulfurase] + A + AMP + diphosphate + H(+). Its pathway is tRNA modification. Its function is as follows. Catalyzes the ATP-dependent 2-thiolation of cytidine in position 32 of tRNA, to form 2-thiocytidine (s(2)C32). The sulfur atoms are provided by the cysteine/cysteine desulfurase (IscS) system. In Haemophilus influenzae (strain PittEE), this protein is tRNA-cytidine(32) 2-sulfurtransferase.